Reading from the N-terminus, the 84-residue chain is Acyl carrier protein (84 aa).

Residues 6–81 (EEILTGLAEI…DAVDYIANAT (76 aa)) enclose the Carrier domain. S41 carries the O-(pantetheine 4'-phosphoryl)serine modification.

This sequence belongs to the acyl carrier protein (ACP) family. Post-translationally, 4'-phosphopantetheine is transferred from CoA to a specific serine of apo-ACP by AcpS. This modification is essential for activity because fatty acids are bound in thioester linkage to the sulfhydryl of the prosthetic group.

It is found in the cytoplasm. The protein operates within lipid metabolism; fatty acid biosynthesis. In terms of biological role, carrier of the growing fatty acid chain in fatty acid biosynthesis. This chain is Acyl carrier protein, found in Acidothermus cellulolyticus (strain ATCC 43068 / DSM 8971 / 11B).